The primary structure comprises 187 residues: UPF0301 protein HSM_1900 (187 aa).

Belongs to the UPF0301 (AlgH) family.

The sequence is that of UPF0301 protein HSM_1900 from Histophilus somni (strain 2336) (Haemophilus somnus).